A 729-amino-acid polypeptide reads, in one-letter code: Probable cyclic di-GMP phosphodiesterase PdeA (729 aa).

Transmembrane regions (helical) follow at residues 17–37, 41–61, 83–103, 126–146, 163–183, 214–234, 238–258, and 289–309; these read AFTL…LAII, YIFL…IFGW, FLQT…ACAI, FWLG…VGSF, IFTV…NMLF, AFTL…CTPY, FIAG…VGKL, and YSLA…LYMV. In terms of domain architecture, GGDEF spans 348-476; that stretch reads AGKSFCCLRI…AHHHVLALDS (129 aa). In terms of domain architecture, EAL spans 488 to 729; it reads QVLLLNTIRT…LIGRPQPLAD (242 aa).

The protein localises to the cell membrane. The enzyme catalyses 3',3'-c-di-GMP + H2O = 5'-phosphoguanylyl(3'-&gt;5')guanosine + H(+). Functionally, phosphodiesterase (PDE) that catalyzes the hydrolysis of cyclic-di-GMP (c-di-GMP) to 5'-pGpG. This Escherichia coli (strain K12) protein is Probable cyclic di-GMP phosphodiesterase PdeA.